The primary structure comprises 477 residues: Bifunctional protein HldE (477 aa).

Residues Met1 to Thr318 form a ribokinase region. Asn195–Glu198 contributes to the ATP binding site. Asp264 is an active-site residue. The segment at Met344–Lys477 is cytidylyltransferase.

It in the N-terminal section; belongs to the carbohydrate kinase PfkB family. This sequence in the C-terminal section; belongs to the cytidylyltransferase family. Homodimer.

The enzyme catalyses D-glycero-beta-D-manno-heptose 7-phosphate + ATP = D-glycero-beta-D-manno-heptose 1,7-bisphosphate + ADP + H(+). It catalyses the reaction D-glycero-beta-D-manno-heptose 1-phosphate + ATP + H(+) = ADP-D-glycero-beta-D-manno-heptose + diphosphate. It participates in nucleotide-sugar biosynthesis; ADP-L-glycero-beta-D-manno-heptose biosynthesis; ADP-L-glycero-beta-D-manno-heptose from D-glycero-beta-D-manno-heptose 7-phosphate: step 1/4. Its pathway is nucleotide-sugar biosynthesis; ADP-L-glycero-beta-D-manno-heptose biosynthesis; ADP-L-glycero-beta-D-manno-heptose from D-glycero-beta-D-manno-heptose 7-phosphate: step 3/4. In terms of biological role, catalyzes the phosphorylation of D-glycero-D-manno-heptose 7-phosphate at the C-1 position to selectively form D-glycero-beta-D-manno-heptose-1,7-bisphosphate. Functionally, catalyzes the ADP transfer from ATP to D-glycero-beta-D-manno-heptose 1-phosphate, yielding ADP-D-glycero-beta-D-manno-heptose. In Klebsiella pneumoniae subsp. pneumoniae (strain ATCC 700721 / MGH 78578), this protein is Bifunctional protein HldE.